A 181-amino-acid polypeptide reads, in one-letter code: Putative manganese efflux pump MntP (181 aa).

5 consecutive transmembrane segments (helical) span residues 35-55, 59-79, 102-122, 126-146, and 161-181; these read IIFG…GSIA, VADW…LLMI, AATG…LAFI, ILIT…LGVM, and ILGG…HLTM.

It belongs to the MntP (TC 9.B.29) family.

Its subcellular location is the cell inner membrane. Probably functions as a manganese efflux pump. This is Putative manganese efflux pump MntP from Nitrosomonas eutropha (strain DSM 101675 / C91 / Nm57).